We begin with the raw amino-acid sequence, 341 residues long: Ectoine-binding periplasmic protein TeaA (341 aa).

The N-terminal stretch at 1–25 is a signal peptide; the sequence is MKAYKLLTTASIGALMLGMSTAAYS. Residues E34, R169, N209, W213, and F234 each contribute to the L-ectoine site.

It belongs to the bacterial solute-binding protein 7 family. As to quaternary structure, monomer. The complex comprises the extracytoplasmic solute receptor protein TeaA, and the two transmembrane proteins TeaB and TeaC.

It is found in the periplasm. Part of the tripartite ATP-independent periplasmic (TRAP) transport system TeaABC involved in the uptake of ectoine and hydroxyectoine in response to osmotic upshock. Probably functions as a recovery system for synthesized ectoine that leaks out of the cell. Binds ectoine with high affinity. Affinity for hydroxyectoine is approximately 20-fold lower. This chain is Ectoine-binding periplasmic protein TeaA (teaA), found in Halomonas elongata (strain ATCC 33173 / DSM 2581 / NBRC 15536 / NCIMB 2198 / 1H9).